The chain runs to 447 residues: GTPase Der (447 aa).

EngA-type G domains follow at residues 3–167 (PVIA…VQER) and 181–354 (VKIA…AAAM). Residues 9 to 16 (GRPNVGKS), 56 to 60 (DTGGF), 119 to 122 (NKAE), 187 to 194 (GRPNVGKS), 234 to 238 (DTAGL), and 299 to 302 (NKWD) contribute to the GTP site. A KH-like domain is found at 355–439 (IKLPTPQITR…PLRIEFRTNK (85 aa)).

It belongs to the TRAFAC class TrmE-Era-EngA-EngB-Septin-like GTPase superfamily. EngA (Der) GTPase family. As to quaternary structure, associates with the 50S ribosomal subunit.

Functionally, GTPase that plays an essential role in the late steps of ribosome biogenesis. This Cupriavidus metallidurans (strain ATCC 43123 / DSM 2839 / NBRC 102507 / CH34) (Ralstonia metallidurans) protein is GTPase Der.